Consider the following 581-residue polypeptide: Proline--tRNA ligase 1 (581 aa).

Belongs to the class-II aminoacyl-tRNA synthetase family. ProS type 1 subfamily. As to quaternary structure, homodimer.

Its subcellular location is the cytoplasm. It carries out the reaction tRNA(Pro) + L-proline + ATP = L-prolyl-tRNA(Pro) + AMP + diphosphate. Functionally, catalyzes the attachment of proline to tRNA(Pro) in a two-step reaction: proline is first activated by ATP to form Pro-AMP and then transferred to the acceptor end of tRNA(Pro). As ProRS can inadvertently accommodate and process non-cognate amino acids such as alanine and cysteine, to avoid such errors it has two additional distinct editing activities against alanine. One activity is designated as 'pretransfer' editing and involves the tRNA(Pro)-independent hydrolysis of activated Ala-AMP. The other activity is designated 'posttransfer' editing and involves deacylation of mischarged Ala-tRNA(Pro). The misacylated Cys-tRNA(Pro) is not edited by ProRS. The polypeptide is Proline--tRNA ligase 1 (Rhodococcus jostii (strain RHA1)).